A 232-amino-acid chain; its full sequence is 5'-methylthioadenosine/S-adenosylhomocysteine nucleosidase (232 aa).

E12 (proton acceptor) is an active-site residue. Substrate is bound by residues G78, I152, and 173-174 (ME). D197 serves as the catalytic Proton donor.

Belongs to the PNP/UDP phosphorylase family. MtnN subfamily. Homodimer.

The enzyme catalyses S-adenosyl-L-homocysteine + H2O = S-(5-deoxy-D-ribos-5-yl)-L-homocysteine + adenine. The catalysed reaction is S-methyl-5'-thioadenosine + H2O = 5-(methylsulfanyl)-D-ribose + adenine. It catalyses the reaction 5'-deoxyadenosine + H2O = 5-deoxy-D-ribose + adenine. It participates in amino-acid biosynthesis; L-methionine biosynthesis via salvage pathway; S-methyl-5-thio-alpha-D-ribose 1-phosphate from S-methyl-5'-thioadenosine (hydrolase route): step 1/2. Its function is as follows. Catalyzes the irreversible cleavage of the glycosidic bond in both 5'-methylthioadenosine (MTA) and S-adenosylhomocysteine (SAH/AdoHcy) to adenine and the corresponding thioribose, 5'-methylthioribose and S-ribosylhomocysteine, respectively. Also cleaves 5'-deoxyadenosine, a toxic by-product of radical S-adenosylmethionine (SAM) enzymes, into 5-deoxyribose and adenine. Thus, is required for in vivo function of the radical SAM enzymes biotin synthase and lipoic acid synthase, that are inhibited by 5'-deoxyadenosine accumulation. In Cronobacter sakazakii (strain ATCC BAA-894) (Enterobacter sakazakii), this protein is 5'-methylthioadenosine/S-adenosylhomocysteine nucleosidase.